Here is a 65-residue protein sequence, read N- to C-terminus: uncharacterized protein (65 aa).

The protein localises to the plastid. The protein resides in the chloroplast. This is an uncharacterized protein from Porphyra purpurea (Red seaweed).